The chain runs to 630 residues: Pentatricopeptide repeat-containing protein At1g26460, mitochondrial (630 aa).

A mitochondrion-targeting transit peptide spans 1–115; it reads MASHLFTRSR…RALSETLDMN (115 aa). A disordered region spans residues 42–79; the sequence is LLATESTDHDPSNHQSTSTPLPPNPATGSPLYQENWRS. The span at 67 to 77 shows a compositional bias: polar residues; it reads ATGSPLYQENW. 6 PPR repeats span residues 154-189, 190-224, 227-261, 468-503, 504-538, and 539-573; these read DVNLYNHYLRANLMMGASAGDMLDLVAPMEEFSVEP, NTASYNLVLKAMYQARETEAAMKLLERMLLLGKDS, DDESYDLVIGMHFGVGKNDEAMKVMDTALKSGYML, SVAALNCIILGCANTWDLDRAYQTFEAISASFGLTP, NIDSYNALLYAFGKVKKTFEATNVFEHLVSIGVKP, and DSRTYSLLVDAHLINRDPKSALTVVDDMIKAGFEP.

The protein belongs to the PPR family. P subfamily.

Its subcellular location is the mitochondrion. This is Pentatricopeptide repeat-containing protein At1g26460, mitochondrial from Arabidopsis thaliana (Mouse-ear cress).